Here is a 515-residue protein sequence, read N- to C-terminus: Dimethylnonatriene synthase (515 aa).

Residues 3 to 23 traverse the membrane as a helical segment; that stretch reads FLFSTLQLSLFSLALVIFGYI. His-219 is a binding site for substrate. Residue Lys-252 forms a Glycyl lysine isopeptide (Lys-Gly) (interchain with G-Cter in ubiquitin) linkage. Residue Cys-452 participates in heme binding.

It belongs to the cytochrome P450 family. The cofactor is heme. As to expression, expressed in stems, flower peduncles, receptacle of developing and mature flowers and in stigma of mature opening flower buds.

Its subcellular location is the membrane. It carries out the reaction (3S,6E)-nerolidol + reduced [NADPH--hemoprotein reductase] + O2 = (3E)-4,8-dimethylnona-1,3,7-triene + but-3-en-2-one + oxidized [NADPH--hemoprotein reductase] + 2 H2O + H(+). The catalysed reaction is (6E,10E)-geranyllinalool + reduced [NADPH--hemoprotein reductase] + O2 = (3E,7E)-4,8,12-trimethyltrideca 1,3,7,11-tetraene + but-3-en-2-one + oxidized [NADPH--hemoprotein reductase] + 2 H2O + H(+). It functions in the pathway secondary metabolite biosynthesis; terpenoid biosynthesis. Functionally, involved in the biosynthesis of homoterpenes, attractants of herbivores parasitoids and predators (e.g. predatory mites and parasitoid wasps). Catalyzes the conversion of the C20 (E,E)-geranyllinalool to C16-homoterpene 4,8,12-trimethyltrideca-1,3,7,11-tetraene (TMTT) of the C15 (E)-nerolidol to C11-homoterpene (E)-4,8-dimethyl-1,3,7-nonatriene (DMNT); these volatile compounds are produced upon insect herbivore attack and emitted from flowers and vegetative tissues during herbivore feeding. Required during resistance responses to the fungus Alternaria brassicae. Prevents oviposition of the phloem-feeding insect cabbage whitefly (Aleyrodes proletella). The chain is Dimethylnonatriene synthase from Arabidopsis thaliana (Mouse-ear cress).